The primary structure comprises 598 residues: Probable translation initiation factor IF-2 (598 aa).

A tr-type G domain is found at 3 to 225 (LRCPIVSVLG…GLAQKFLEQK (223 aa)). Residues 12–19 (GHVDHGKT) form a G1 region. GTP is bound at residue 12–19 (GHVDHGKT). The tract at residues 37–41 (GITQH) is G2. The tract at residues 76–79 (DTPG) is G3. Residues 76–80 (DTPGH) and 130–133 (NKLD) contribute to the GTP site. Residues 130 to 133 (NKLD) are G4. Residues 200–202 (SAM) are G5.

It belongs to the TRAFAC class translation factor GTPase superfamily. Classic translation factor GTPase family. IF-2 subfamily.

Its function is as follows. Function in general translation initiation by promoting the binding of the formylmethionine-tRNA to ribosomes. Seems to function along with eIF-2. This chain is Probable translation initiation factor IF-2, found in Methanococcus maripaludis (strain C6 / ATCC BAA-1332).